The primary structure comprises 706 residues: DNA ligase (706 aa).

The tract at residues Met1–Ala20 is disordered. NAD(+)-binding positions include Asp50 to Asp54, Ser99 to Leu100, and Glu128. Lys130 acts as the N6-AMP-lysine intermediate in catalysis. 4 residues coordinate NAD(+): Arg151, Glu188, Lys304, and Lys328. Positions 422, 425, 440, and 446 each coordinate Zn(2+). The region spanning Glu604–Pro694 is the BRCT domain.

Belongs to the NAD-dependent DNA ligase family. LigA subfamily. Mg(2+) is required as a cofactor. The cofactor is Mn(2+).

The enzyme catalyses NAD(+) + (deoxyribonucleotide)n-3'-hydroxyl + 5'-phospho-(deoxyribonucleotide)m = (deoxyribonucleotide)n+m + AMP + beta-nicotinamide D-nucleotide.. Its function is as follows. DNA ligase that catalyzes the formation of phosphodiester linkages between 5'-phosphoryl and 3'-hydroxyl groups in double-stranded DNA using NAD as a coenzyme and as the energy source for the reaction. It is essential for DNA replication and repair of damaged DNA. The protein is DNA ligase of Frankia casuarinae (strain DSM 45818 / CECT 9043 / HFP020203 / CcI3).